The following is a 321-amino-acid chain: tRNA(Ile)-lysidine synthase (321 aa).

Residue 30-35 (SGGSDS) participates in ATP binding.

This sequence belongs to the tRNA(Ile)-lysidine synthase family.

Its subcellular location is the cytoplasm. It carries out the reaction cytidine(34) in tRNA(Ile2) + L-lysine + ATP = lysidine(34) in tRNA(Ile2) + AMP + diphosphate + H(+). Its function is as follows. Ligates lysine onto the cytidine present at position 34 of the AUA codon-specific tRNA(Ile) that contains the anticodon CAU, in an ATP-dependent manner. Cytidine is converted to lysidine, thus changing the amino acid specificity of the tRNA from methionine to isoleucine. This chain is tRNA(Ile)-lysidine synthase, found in Chlamydia trachomatis serovar A (strain ATCC VR-571B / DSM 19440 / HAR-13).